The sequence spans 105 residues: Large ribosomal subunit protein bL21 (105 aa).

The protein belongs to the bacterial ribosomal protein bL21 family. In terms of assembly, part of the 50S ribosomal subunit. Contacts protein L20.

Its function is as follows. This protein binds to 23S rRNA in the presence of protein L20. In Methylobacterium nodulans (strain LMG 21967 / CNCM I-2342 / ORS 2060), this protein is Large ribosomal subunit protein bL21.